The primary structure comprises 172 residues: Adenine phosphoribosyltransferase (172 aa).

The protein belongs to the purine/pyrimidine phosphoribosyltransferase family. As to quaternary structure, homodimer.

The protein resides in the cytoplasm. The catalysed reaction is AMP + diphosphate = 5-phospho-alpha-D-ribose 1-diphosphate + adenine. Its pathway is purine metabolism; AMP biosynthesis via salvage pathway; AMP from adenine: step 1/1. Its function is as follows. Catalyzes a salvage reaction resulting in the formation of AMP, that is energically less costly than de novo synthesis. The sequence is that of Adenine phosphoribosyltransferase from Streptococcus agalactiae serotype III (strain NEM316).